The chain runs to 69 residues: ATP synthase F(0) complex subunit 8 (69 aa).

Residues 8–24 (TWLLTITLMILALFCIY) form a helical membrane-spanning segment. Lys55 carries the N6-acetyllysine; alternate modification. N6-succinyllysine; alternate is present on Lys55. Lys58 carries the N6-acetyllysine modification.

The protein belongs to the ATPase protein 8 family. Component of the ATP synthase complex composed at least of ATP5F1A/subunit alpha, ATP5F1B/subunit beta, ATP5MC1/subunit c (homooctomer), MT-ATP6/subunit a, MT-ATP8/subunit 8, ATP5ME/subunit e, ATP5MF/subunit f, ATP5MG/subunit g, ATP5MK/subunit k, ATP5MJ/subunit j, ATP5F1C/subunit gamma, ATP5F1D/subunit delta, ATP5F1E/subunit epsilon, ATP5PF/subunit F6, ATP5PB/subunit b, ATP5PD/subunit d, ATP5PO/subunit OSCP. ATP synthase complex consists of a soluble F(1) head domain (subunits alpha(3) and beta(3)) - the catalytic core - and a membrane F(0) domain - the membrane proton channel (subunits c, a, 8, e, f, g, k and j). These two domains are linked by a central stalk (subunits gamma, delta, and epsilon) rotating inside the F1 region and a stationary peripheral stalk (subunits F6, b, d, and OSCP). Interacts with PRICKLE3.

The protein localises to the mitochondrion membrane. Subunit 8, of the mitochondrial membrane ATP synthase complex (F(1)F(0) ATP synthase or Complex V) that produces ATP from ADP in the presence of a proton gradient across the membrane which is generated by electron transport complexes of the respiratory chain. ATP synthase complex consist of a soluble F(1) head domain - the catalytic core - and a membrane F(1) domain - the membrane proton channel. These two domains are linked by a central stalk rotating inside the F(1) region and a stationary peripheral stalk. During catalysis, ATP synthesis in the catalytic domain of F(1) is coupled via a rotary mechanism of the central stalk subunits to proton translocation. In vivo, can only synthesize ATP although its ATP hydrolase activity can be activated artificially in vitro. Part of the complex F(0) domain. The polypeptide is ATP synthase F(0) complex subunit 8 (Osphranter robustus (Wallaroo)).